A 429-amino-acid polypeptide reads, in one-letter code: Saccharopine dehydrogenase-like oxidoreductase (429 aa).

Ala2 bears the N-acetylalanine mark. Ser217 carries the phosphoserine modification.

It belongs to the saccharopine dehydrogenase family.

This chain is Saccharopine dehydrogenase-like oxidoreductase (SCCPDH), found in Bos taurus (Bovine).